A 1109-amino-acid chain; its full sequence is MIQNLQRKDSQWTPFILPDLISIQRDSFLLFLERGLATELSHVTPLTGSHFRITLCSHGYRLKRPKVSIQEAVYQATSYSAALYVNVETNQSNLGTQETQIQSVWMGDIPLMTSRGHFIINGSSRVVVNQIVRSPGIYFKEMIDQKHRRMFQASIISNRGSWVRLETDVDGMIWVRMDKAKKISILIVLEAMGLSKKTIFRSLKSPEFLFKALQQLLAKKRWQDKVYELIPQSTTDALFHLYTKLSPDKPGNTLTARRVLYEKLMDAKRYDVGLVGRVKLNKKLKLPVPEHVHTLRPVDFLAATDYLIGLEYGRGQVDDIDHLKNRRVRCAGELIQSQLRIGLNRLERTMQGRISRPGELPGMSSLMNPKPVMAALREFFGSNPLSQFMDQTNPLAELTHKRRLSSLGPGGLSQDRAGMAVREIHPSQYGRICPIETPEGPNAGLIGSMATYARLNQYGGLECPFYQVVEGKVLYEFGPIFLTAEQEDQVTVVAGDILDQRKLMVAVAEGRDPLDPAVRPTLPDRPLILRSRQEFHTGSFRDVNYVGIAPTQMISVATSLIPFLEHDDANRALMGSNMQRQAVPLLKTEAPIIGTGLEAQVAADAGGVVQSPFEGIVVYVDATRIVVSTSKSKLALSKKRKIHESNVFLQVYQRSNQGTCIHQRPIIPLHTPVIRGDLLADGSSTSGGQIALGKNLLVAYMPWEGYNFEDAILISERLIYDDLYTSLHIERYEVETQHTKLGPEEITKSIVHETDDKLPYRWLDERGIVMRGAWVEPGDVLIGKITPKEEKELTPELRLVYAIFGKRPKGFRDTSLRVPQGVRGRVVDVRMIRDEDTKVVHVYVCQQRQIQVGDKMAGRHGNKGIVSRIVPRQDMPYLQDGTPVDMVLNPLGVPSRMNVGQVFECLLGLAGQRLGQQLKVRAFDEMYGAEASRHLVYNKLHEASEVTGHHWLFDPNHPGKSRLIDGRTGDMFDQAVTIGQAYMLKLIHQVDDKIHARATGPYSLITQQPLGGRSKRGGQRLGEMEVWAFEGFGAAYTLQELLTVKSDDMQGRNEIMSAMVQGRQLPEMGTPESFKVMIRELQALCLDIGIYHRSKMTFKTEEIDLMQMR.

The protein belongs to the RNA polymerase beta chain family. In terms of assembly, in plastids the minimal PEP RNA polymerase catalytic core is composed of four subunits: alpha, beta, beta', and beta''. When a (nuclear-encoded) sigma factor is associated with the core the holoenzyme is formed, which can initiate transcription.

Its subcellular location is the plastid. The protein resides in the chloroplast. The catalysed reaction is RNA(n) + a ribonucleoside 5'-triphosphate = RNA(n+1) + diphosphate. Functionally, DNA-dependent RNA polymerase catalyzes the transcription of DNA into RNA using the four ribonucleoside triphosphates as substrates. The sequence is that of DNA-directed RNA polymerase subunit beta from Nephroselmis olivacea (Green alga).